The chain runs to 138 residues: Basic phospholipase A2 BP-III (138 aa).

An N-terminal signal peptide occupies residues 1–16 (MRTLWIMAVLLVGVDG). 7 disulfide bridges follow: C42-C132, C44-C60, C59-C112, C65-C138, C66-C105, C73-C98, and C91-C103. 2 residues coordinate Ca(2+): G45 and G47. H63 is a catalytic residue. D106 is an active-site residue.

It belongs to the phospholipase A2 family. Group II subfamily. K49 sub-subfamily. Ca(2+) is required as a cofactor. Expressed by the venom gland.

It localises to the secreted. It carries out the reaction a 1,2-diacyl-sn-glycero-3-phosphocholine + H2O = a 1-acyl-sn-glycero-3-phosphocholine + a fatty acid + H(+). In terms of biological role, snake venom phospholipase A2 (PLA2) that has low phospholipase A2 activity. Shows anticoagulant activities, strong myolytic activity, infiltration of polymorphonuclear cells, and edema in stromal tissues. Induces cell death of Jurkat cells in a concentration dependent manner. PLA2 catalyzes the calcium-dependent hydrolysis of the 2-acyl groups in 3-sn-phosphoglycerides. The chain is Basic phospholipase A2 BP-III from Protobothrops flavoviridis (Habu).